Reading from the N-terminus, the 498-residue chain is ATP synthase subunit beta, chloroplastic (498 aa).

Glycine 172–threonine 179 contributes to the ATP binding site.

Belongs to the ATPase alpha/beta chains family. F-type ATPases have 2 components, CF(1) - the catalytic core - and CF(0) - the membrane proton channel. CF(1) has five subunits: alpha(3), beta(3), gamma(1), delta(1), epsilon(1). CF(0) has four main subunits: a(1), b(1), b'(1) and c(9-12).

The protein localises to the plastid. Its subcellular location is the chloroplast thylakoid membrane. The catalysed reaction is ATP + H2O + 4 H(+)(in) = ADP + phosphate + 5 H(+)(out). Produces ATP from ADP in the presence of a proton gradient across the membrane. The catalytic sites are hosted primarily by the beta subunits. The polypeptide is ATP synthase subunit beta, chloroplastic (Solanum bulbocastanum (Wild potato)).